The chain runs to 126 residues: MHLSQLIACALLLALLSLRPSEAKPGTPPKVPRTPPGEELAEPQAAGGNQKKGDKTPGGGGANLKGDRSRLLRDLRVDTKSRAAWARLLHEHPNARKYKGGNKKGLSKGCFGLKLDRIGSMSGLGC.

Positions 1 to 23 (MHLSQLIACALLLALLSLRPSEA) are cleaved as a signal peptide. The interval 19 to 71 (RPSEAKPGTPPKVPRTPPGEELAEPQAAGGNQKKGDKTPGGGGANLKGDRSRL) is disordered. Residues 24 to 73 (KPGTPPKVPRTPPGEELAEPQAAGGNQKKGDKTPGGGGANLKGDRSRLLR) constitute a propeptide that is removed on maturation. Residues 26–35 (GTPPKVPRTP) show a composition bias toward pro residues. Cysteines 110 and 126 form a disulfide.

The protein belongs to the natriuretic peptide family. In terms of processing, degraded by IDE (in vitro). Expressed exclusively in brain.

The protein resides in the secreted. Hormone which plays a role in endochondral ossification through regulation of cartilaginous growth plate chondrocytes proliferation and differentiation. May also be vasoactive and natriuretic. Acts by specifically binding and stimulating NPR2 to produce cGMP. Binds the clearance receptor NPR3. The sequence is that of C-type natriuretic peptide (Nppc) from Rattus norvegicus (Rat).